Reading from the N-terminus, the 110-residue chain is Small ribosomal subunit protein eS25 (110 aa).

Residues 1–37 (MGGASKKPISTMEKRLKKEAEKQQKAEEKKKGPSKTG) form a disordered region. Residues 12–37 (MEKRLKKEAEKQQKAEEKKKGPSKTG) are compositionally biased toward basic and acidic residues.

It belongs to the eukaryotic ribosomal protein eS25 family.

The protein is Small ribosomal subunit protein eS25 (rps25e) of Saccharolobus solfataricus (strain ATCC 35092 / DSM 1617 / JCM 11322 / P2) (Sulfolobus solfataricus).